We begin with the raw amino-acid sequence, 284 residues long: Putative thiosulfate sulfurtransferase SseB (284 aa).

Rhodanese domains follow at residues 20–138 (AGDP…SIET) and 169–280 (GAGG…RPVG). Arg-183 contacts substrate. The Cysteine persulfide intermediate role is filled by Cys-241.

The catalysed reaction is thiosulfate + hydrogen cyanide = thiocyanate + sulfite + 2 H(+). This Mycobacterium tuberculosis (strain CDC 1551 / Oshkosh) protein is Putative thiosulfate sulfurtransferase SseB (sseB).